Reading from the N-terminus, the 363-residue chain is Protein-glutamate methylesterase/protein-glutamine glutaminase 2 (363 aa).

The Response regulatory domain maps to 7-124; it reads RVLVVDDSAL…SLTLENVADE (118 aa). Asp58 bears the 4-aspartylphosphate mark. The CheB-type methylesterase domain occupies 160–357; it reads PVASRTTPSK…NLLMVQSAAQ (198 aa). Residues Ser176, His203, and Asp299 contribute to the active site.

This sequence belongs to the CheB family. Post-translationally, phosphorylated by CheA. Phosphorylation of the N-terminal regulatory domain activates the methylesterase activity.

The protein resides in the cytoplasm. It catalyses the reaction [protein]-L-glutamate 5-O-methyl ester + H2O = L-glutamyl-[protein] + methanol + H(+). The catalysed reaction is L-glutaminyl-[protein] + H2O = L-glutamyl-[protein] + NH4(+). Involved in chemotaxis. Part of a chemotaxis signal transduction system that modulates chemotaxis in response to various stimuli. Catalyzes the demethylation of specific methylglutamate residues introduced into the chemoreceptors (methyl-accepting chemotaxis proteins or MCP) by CheR. Also mediates the irreversible deamidation of specific glutamine residues to glutamic acid. This chain is Protein-glutamate methylesterase/protein-glutamine glutaminase 2, found in Koribacter versatilis (strain Ellin345).